The chain runs to 281 residues: MTNYDQHHALQSLTLGKPTPYRERYDPSLLQAVPRALNRDLLGLQATALPFHGADIWTLYELSWLNDAGIPQVAIGEIALNATSTNLIESKSFKLYLNSLNQTSFPSREAVRVRLAEDLSRCADGEVQVVLRALSDFTSSPLLDFDGECIDDQPIHIDDYTFTNRYLEGAAGGSVVSETLVSHLLKSNCLITHQPDWGSVQIRYRGARIDREALLRYLVSFRQHNEFHEQCVERIFCDVMQFCRPETLTVYARYTRRGGLDINPWRSNTHFSPATGRLARQ.

88–90 lines the substrate pocket; sequence IES. 90–91 contributes to the NADPH binding site; the sequence is SK. The active-site Thioimide intermediate is cysteine 189. Aspartate 196 acts as the Proton donor in catalysis. Substrate is bound at residue 228–229; it reads HE. 257–258 is an NADPH binding site; that stretch reads RG.

The protein belongs to the GTP cyclohydrolase I family. QueF type 2 subfamily. As to quaternary structure, homodimer.

The protein localises to the cytoplasm. The enzyme catalyses 7-aminomethyl-7-carbaguanine + 2 NADP(+) = 7-cyano-7-deazaguanine + 2 NADPH + 3 H(+). Its pathway is tRNA modification; tRNA-queuosine biosynthesis. In terms of biological role, catalyzes the NADPH-dependent reduction of 7-cyano-7-deazaguanine (preQ0) to 7-aminomethyl-7-deazaguanine (preQ1). This chain is NADPH-dependent 7-cyano-7-deazaguanine reductase, found in Sodalis glossinidius (strain morsitans).